We begin with the raw amino-acid sequence, 190 residues long: Peptidyl-prolyl cis-trans isomerase FKBP20-1 (190 aa).

Gly2 carries the post-translational modification N-acetylglycine. Positions 32–121 (LPVVDVHYEG…IFEVELVACR (90 aa)) constitute a PPIase FKBP-type domain. Residues 149-163 (AAAKEDDKKKREEAK) are compositionally biased toward basic and acidic residues. The segment at 149-190 (AAAKEDDKKKREEAKAAAAARIQAKLDAKKGPGKGKGKGKAK) is disordered. The span at 179–190 (GPGKGKGKGKAK) shows a compositional bias: basic residues.

Belongs to the FKBP-type PPIase family.

It carries out the reaction [protein]-peptidylproline (omega=180) = [protein]-peptidylproline (omega=0). In terms of biological role, PPIases accelerate the folding of proteins. It catalyzes the cis-trans isomerization of proline imidic peptide bonds in oligopeptides. The protein is Peptidyl-prolyl cis-trans isomerase FKBP20-1 (FKBP20-1) of Arabidopsis thaliana (Mouse-ear cress).